A 342-amino-acid polypeptide reads, in one-letter code: Galactose mutarotase (342 aa).

Residues 81–82 and His107 each bind beta-D-galactose; that span reads NR. Ser124 is subject to Phosphoserine. The active-site Proton donor is the His176. Beta-D-galactose is bound by residues 176–178, Asp243, Gln279, and Glu307; that span reads HSY. The active-site Proton acceptor is the Glu307.

It belongs to the aldose epimerase family. As to quaternary structure, monomer.

The protein resides in the cytoplasm. It catalyses the reaction alpha-D-galactose = beta-D-galactose. The catalysed reaction is alpha-D-glucose = beta-D-glucose. It participates in carbohydrate metabolism; hexose metabolism. It functions in the pathway carbohydrate metabolism; galactose metabolism. Mutarotase that catalyzes the interconversion of beta-D-galactose and alpha-D-galactose during galactose metabolism. Beta-D-galactose is metabolized in the liver into glucose 1-phosphate, the primary metabolic fuel, by the action of four enzymes that constitute the Leloir pathway: GALM, GALK1 (galactokinase), GALT (galactose-1-phosphate uridylyltransferase) and GALE (UDP-galactose-4'-epimerase). Involved in the maintenance of the equilibrium between the beta- and alpha-anomers of galactose, therefore ensuring a sufficient supply of the alpha-anomer for GALK1. Also active on D-glucose although shows a preference for galactose over glucose. The chain is Galactose mutarotase (GALM) from Bos taurus (Bovine).